Reading from the N-terminus, the 155-residue chain is Ribosomal RNA large subunit methyltransferase H (155 aa).

S-adenosyl-L-methionine-binding positions include L73, G104, and 123-128 (LSPLTL).

Belongs to the RNA methyltransferase RlmH family. Homodimer.

It is found in the cytoplasm. The enzyme catalyses pseudouridine(1915) in 23S rRNA + S-adenosyl-L-methionine = N(3)-methylpseudouridine(1915) in 23S rRNA + S-adenosyl-L-homocysteine + H(+). Specifically methylates the pseudouridine at position 1915 (m3Psi1915) in 23S rRNA. In Pseudomonas entomophila (strain L48), this protein is Ribosomal RNA large subunit methyltransferase H.